The primary structure comprises 159 residues: Protein-export protein SecB (159 aa).

Belongs to the SecB family. In terms of assembly, homotetramer, a dimer of dimers. One homotetramer interacts with 1 SecA dimer.

The protein localises to the cytoplasm. Its function is as follows. One of the proteins required for the normal export of preproteins out of the cell cytoplasm. It is a molecular chaperone that binds to a subset of precursor proteins, maintaining them in a translocation-competent state. It also specifically binds to its receptor SecA. The chain is Protein-export protein SecB from Nitrobacter hamburgensis (strain DSM 10229 / NCIMB 13809 / X14).